The sequence spans 122 residues: Transcription initiation factor IIA subunit 2 (122 aa).

Residues Ser95 and Ser102 each carry the phosphoserine modification.

Belongs to the TFIIA subunit 2 family. TFIIA is a heterodimer composed of the large TOA1 and a small TOA2 subunits. Interacts with TBP. Interacts with TAF11. Interacts with KAP122.

The protein localises to the cytoplasm. It localises to the nucleus. Its function is as follows. TFIIA is a component of the transcription machinery of RNA polymerase II and plays an important role in transcriptional activation. TFIIA in a complex with TBP mediates transcriptional activity. The polypeptide is Transcription initiation factor IIA subunit 2 (TOA2) (Saccharomyces cerevisiae (strain ATCC 204508 / S288c) (Baker's yeast)).